The primary structure comprises 1404 residues: DNA-directed RNA polymerase subunit beta' (1404 aa).

Zn(2+) is bound by residues C70, C72, C85, and C88. Positions 460, 462, and 464 each coordinate Mg(2+). Zn(2+) contacts are provided by C814, C888, C895, and C898.

This sequence belongs to the RNA polymerase beta' chain family. As to quaternary structure, the RNAP catalytic core consists of 2 alpha, 1 beta, 1 beta' and 1 omega subunit. When a sigma factor is associated with the core the holoenzyme is formed, which can initiate transcription. Mg(2+) serves as cofactor. It depends on Zn(2+) as a cofactor.

It catalyses the reaction RNA(n) + a ribonucleoside 5'-triphosphate = RNA(n+1) + diphosphate. DNA-dependent RNA polymerase catalyzes the transcription of DNA into RNA using the four ribonucleoside triphosphates as substrates. This is DNA-directed RNA polymerase subunit beta' from Buchnera aphidicola subsp. Baizongia pistaciae (strain Bp).